Reading from the N-terminus, the 126-residue chain is Aspartate 1-decarboxylase (126 aa).

Ser-25 (schiff-base intermediate with substrate; via pyruvic acid) is an active-site residue. Residue Ser-25 is modified to Pyruvic acid (Ser). Thr-57 is a binding site for substrate. Tyr-58 functions as the Proton donor in the catalytic mechanism. 72–74 (GAA) is a substrate binding site.

This sequence belongs to the PanD family. In terms of assembly, heterooctamer of four alpha and four beta subunits. The cofactor is pyruvate. In terms of processing, is synthesized initially as an inactive proenzyme, which is activated by self-cleavage at a specific serine bond to produce a beta-subunit with a hydroxyl group at its C-terminus and an alpha-subunit with a pyruvoyl group at its N-terminus.

The protein resides in the cytoplasm. It catalyses the reaction L-aspartate + H(+) = beta-alanine + CO2. The protein operates within cofactor biosynthesis; (R)-pantothenate biosynthesis; beta-alanine from L-aspartate: step 1/1. Its function is as follows. Catalyzes the pyruvoyl-dependent decarboxylation of aspartate to produce beta-alanine. The chain is Aspartate 1-decarboxylase from Campylobacter jejuni subsp. jejuni serotype O:23/36 (strain 81-176).